The following is a 351-amino-acid chain: Fe(3+) ions import ATP-binding protein FbpC (351 aa).

The region spanning 7-237 (VVLKNICKRF…PKSMFMANFM (231 aa)) is the ABC transporter domain. An ATP-binding site is contributed by 39-46 (GPSGCGKT).

This sequence belongs to the ABC transporter superfamily. Fe(3+) ion importer (TC 3.A.1.10) family. The complex is composed of two ATP-binding proteins (FbpC), two transmembrane proteins (FbpB) and a solute-binding protein (FbpA).

The protein resides in the cell inner membrane. It carries out the reaction Fe(3+)(out) + ATP + H2O = Fe(3+)(in) + ADP + phosphate + H(+). In terms of biological role, part of the ABC transporter complex FbpABC involved in Fe(3+) ions import. Responsible for energy coupling to the transport system. This Vibrio cholerae serotype O1 (strain ATCC 39315 / El Tor Inaba N16961) protein is Fe(3+) ions import ATP-binding protein FbpC.